A 340-amino-acid polypeptide reads, in one-letter code: Probable dual-specificity RNA methyltransferase RlmN (340 aa).

Glu-90 acts as the Proton acceptor in catalysis. The Radical SAM core domain maps to 97–325 (QVSRKTACLS…PVTRRYQRGN (229 aa)). A disulfide bridge connects residues Cys-104 and Cys-331. Cys-111, Cys-115, and Cys-118 together coordinate [4Fe-4S] cluster. S-adenosyl-L-methionine contacts are provided by residues 157-158 (GE), Ser-189, 212-214 (SLT), and Asn-288. Residue Cys-331 is the S-methylcysteine intermediate of the active site.

This sequence belongs to the radical SAM superfamily. RlmN family. [4Fe-4S] cluster serves as cofactor.

Its subcellular location is the cytoplasm. The enzyme catalyses adenosine(2503) in 23S rRNA + 2 reduced [2Fe-2S]-[ferredoxin] + 2 S-adenosyl-L-methionine = 2-methyladenosine(2503) in 23S rRNA + 5'-deoxyadenosine + L-methionine + 2 oxidized [2Fe-2S]-[ferredoxin] + S-adenosyl-L-homocysteine. The catalysed reaction is adenosine(37) in tRNA + 2 reduced [2Fe-2S]-[ferredoxin] + 2 S-adenosyl-L-methionine = 2-methyladenosine(37) in tRNA + 5'-deoxyadenosine + L-methionine + 2 oxidized [2Fe-2S]-[ferredoxin] + S-adenosyl-L-homocysteine. Functionally, specifically methylates position 2 of adenine 2503 in 23S rRNA and position 2 of adenine 37 in tRNAs. This is Probable dual-specificity RNA methyltransferase RlmN from Treponema pallidum (strain Nichols).